A 105-amino-acid polypeptide reads, in one-letter code: Large ribosomal subunit protein uL24 (105 aa).

This sequence belongs to the universal ribosomal protein uL24 family. Part of the 50S ribosomal subunit.

One of two assembly initiator proteins, it binds directly to the 5'-end of the 23S rRNA, where it nucleates assembly of the 50S subunit. In terms of biological role, one of the proteins that surrounds the polypeptide exit tunnel on the outside of the subunit. This is Large ribosomal subunit protein uL24 from Aeromonas salmonicida (strain A449).